The following is a 92-amino-acid chain: Small ribosomal subunit protein uS19 (92 aa).

This sequence belongs to the universal ribosomal protein uS19 family.

Functionally, protein S19 forms a complex with S13 that binds strongly to the 16S ribosomal RNA. This chain is Small ribosomal subunit protein uS19, found in Bifidobacterium adolescentis (strain ATCC 15703 / DSM 20083 / NCTC 11814 / E194a).